The following is a 432-amino-acid chain: Adenylosuccinate synthetase (432 aa).

Residues 12-18 and 40-42 each bind GTP; these read GDEGKGK and GHT. Asp-13 acts as the Proton acceptor in catalysis. The Mg(2+) site is built by Asp-13 and Gly-40. IMP contacts are provided by residues 13-16, 38-41, Thr-133, Arg-147, Gln-228, Thr-243, and Arg-307; these read DEGK and NAGH. Catalysis depends on His-41, which acts as the Proton donor. A substrate-binding site is contributed by 303-309; that stretch reads TTTGRPR. GTP contacts are provided by residues Arg-309, 335-337, and 417-419; these read KLD and GVG.

Belongs to the adenylosuccinate synthetase family. As to quaternary structure, homodimer. Mg(2+) is required as a cofactor.

It localises to the cytoplasm. It catalyses the reaction IMP + L-aspartate + GTP = N(6)-(1,2-dicarboxyethyl)-AMP + GDP + phosphate + 2 H(+). The protein operates within purine metabolism; AMP biosynthesis via de novo pathway; AMP from IMP: step 1/2. Plays an important role in the de novo pathway of purine nucleotide biosynthesis. Catalyzes the first committed step in the biosynthesis of AMP from IMP. The protein is Adenylosuccinate synthetase of Nocardioides sp. (strain ATCC BAA-499 / JS614).